The sequence spans 551 residues: Protein PLASTID TRANSCRIPTIONALLY ACTIVE 12, chloroplastic (551 aa).

Residues 1-47 constitute a chloroplast transit peptide; sequence MASCSRTWLLPGMAPQATAQTVPRPLQSLKVFAGLPHRRRVLFSGVS. Disordered regions lie at residues 76-161 and 463-529; these read SSYF…EGES and HSYN…DQLS. Residues 109-119 are compositionally biased toward low complexity; that stretch reads RVRAARAPAPV. 2 stretches are compositionally biased toward acidic residues: residues 467–476 and 485–498; these read EDSDDDEEDA and SLEDDEDDGDDAED. The segment covering 505–516 has biased composition (polar residues); sequence RNWSVLKTTGQA. Basic and acidic residues predominate over residues 518–529; the sequence is NPKEKSKKDQLS.

Component of the plastid-encoded plastid RNA polymerase (PEP) complex.

It is found in the plastid. The protein localises to the chloroplast. Its function is as follows. Required for the activity of the plastid-encoded RNA polymerase (PEP) and full expression of genes transcribed by PEP. Required for the proper build-up and formation of the PEP-complex. Binds single-stranded (ss) DNA and RNA, but not double-stranded (ds) DNA. The chain is Protein PLASTID TRANSCRIPTIONALLY ACTIVE 12, chloroplastic from Oryza sativa subsp. japonica (Rice).